Reading from the N-terminus, the 347-residue chain is Autoinducer 2 import system permease protein LsrC (347 aa).

9 helical membrane passes run 14–34 (LLAI…YLSV), 39–59 (MVFS…MVML), 72–92 (GMCA…PVAC), 93–113 (LATL…VAWL), 115–135 (IPAI…MLLW), 155–175 (VFLG…LMAW), 213–233 (LNGG…GFIP), 249–269 (VLGG…ILGA), and 284–304 (IPAW…LVFD).

Belongs to the binding-protein-dependent transport system permease family. AraH/RbsC subfamily. As to quaternary structure, the complex is composed of two ATP-binding proteins (LsrA), two transmembrane proteins (LsrC and LsrD) and a solute-binding protein (LsrB).

The protein resides in the cell inner membrane. Its function is as follows. Part of the ABC transporter complex LsrABCD involved in autoinducer 2 (AI-2) import. Probably responsible for the translocation of the substrate across the membrane. The polypeptide is Autoinducer 2 import system permease protein LsrC (lsrC) (Salmonella choleraesuis (strain SC-B67)).